The following is a 467-amino-acid chain: Immunoglobulin superfamily member 21 (467 aa).

Positions 1–24 (MRTAPSLRRCVCLLLAAILDLARG) are cleaved as a signal peptide. Positions 25 to 132 (YLTVNIEPLP…RATREKVVLA (108 aa)) constitute an Ig-like 1 domain. An intrachain disulfide couples Cys-46 to Cys-116. 2 N-linked (GlcNAc...) asparagine glycosylation sites follow: Asn-82 and Asn-165. Residues 229 to 259 (LSLLDAENRGGRPYTERPSRGLTPDPNILLQ) are disordered. Over residues 234–247 (AENRGGRPYTERPS) the composition is skewed to basic and acidic residues. One can recognise an Ig-like 2 domain in the interval 344–429 (PKIVMTPSRA…GSTDTHTRLI (86 aa)). N-linked (GlcNAc...) asparagine glycosylation is found at Asn-407 and Asn-444.

As to quaternary structure, interacts (Ig-like 1 domain) with NRXN2 (via Laminin G-like 1 domain) in a trans-interaction manner.

The protein localises to the postsynaptic cell membrane. Its function is as follows. Involved in synaptic inhibition in the brain. Selectively regulates inhibitory presynaptic differentiation through interacting with presynaptic NRXN2. In Homo sapiens (Human), this protein is Immunoglobulin superfamily member 21.